Here is a 749-residue protein sequence, read N- to C-terminus: Metabotropic glutamate receptor-like protein M (749 aa).

The first 22 residues, 1–22, serve as a signal peptide directing secretion; it reads MIKLILSLIFLIICCNINPSES. Residues 23–385 lie on the Extracellular side of the membrane; sequence FKLITLTTGP…KIEFSSSVQK (363 aa). N-linked (GlcNAc...) asparagine glycans are attached at residues Asn67, Asn164, Asn257, Asn271, and Asn345. Residues 386–406 traverse the membrane as a helical segment; that stretch reads GFSIVSGCLIAFVILMMVGIV. Residues 407 to 419 lie on the Cytoplasmic side of the membrane; it reads YYKDTPSIRSASP. The helical transmembrane segment at 420 to 440 threads the bilayer; sequence IFLNFSLIGGIIIYIGIIIWV. Over 441-456 the chain is Extracellular; that stretch reads GPISTHQCNARFWLVT. Residues 457 to 477 form a helical membrane-spanning segment; sequence LGFSTLIGSLVVKNFRIWLIF. Over 478-492 the chain is Cytoplasmic; it reads DNPELKAIKITNYQL. The chain crosses the membrane as a helical span at residues 493 to 513; it reads FPWVGLCLVINIVLMAILTSV. Over 514-544 the chain is Extracellular; it reads GDLKAIEAQGIDSLGKYEYMTVCKMNSAGAS. Residues 545–565 form a helical membrane-spanning segment; sequence TLYSILAYFAALLLVGVFVSW. Topologically, residues 566–579 are cytoplasmic; the sequence is KIRIVDIEEFNESK. A helical membrane pass occupies residues 580-600; that stretch reads AIANTLYAVSFCLFVIVPLMI. The Extracellular portion of the chain corresponds to 601–609; it reads SPQEKQSET. The helical transmembrane segment at 610 to 630 threads the bilayer; sequence IILCVAGLFITTAALLIVFIP. Over 631-749 the chain is Cytoplasmic; that stretch reads KFWRVFIYGK…EEPVKTESQE (119 aa). The disordered stretch occupies residues 658 to 749; that stretch reads ARAESLSKNS…EEPVKTESQE (92 aa). A compositionally biased stretch (polar residues) spans 698 to 716; the sequence is SSLSEPNKPTKNNDGNVNV. Residues 725–740 are compositionally biased toward acidic residues; it reads FTDDTISEFDENEVNE.

It in the N-terminal section; belongs to the BMP lipoprotein family. In the C-terminal section; belongs to the G-protein coupled receptor 3 family. GABA-B receptor subfamily.

It localises to the membrane. This chain is Metabotropic glutamate receptor-like protein M (grlM), found in Dictyostelium discoideum (Social amoeba).